The primary structure comprises 105 residues: UPF0145 protein CCNA_02462 (105 aa).

Belongs to the UPF0145 family.

The polypeptide is UPF0145 protein CCNA_02462 (Caulobacter vibrioides (strain NA1000 / CB15N) (Caulobacter crescentus)).